The primary structure comprises 656 residues: MWSLALATLFVLGTVIRADQCPPVPADTKDKLEKILELIGHVNRPLTPETPEPAGYDETKLKGLGILPQHEIFSLFDERTWPEATKAAEFLMEATDFEHFIQRADVLRHRINEDMFMYALNVAVLHRKDTRGVQVPRIHKIYPDKFLKQDILVEVREKVNHGEEKPVVDATELHQNQLDPNYRLSYFLEDIGMNSHHYHWHVVHPAVWLPKHGPRKDRKGELFYYMHHQMVARYDSERLSNNLPRTEPFENWDDPLEEGYAPHLTIHKTGYNYMFRPEGLIVRDLPELNKNKMRQWKSRILHGIHLNVLYAENGTKISLDNEHGIDLLGDAIESSLLSVNRAFYGNIHCYAHVMAARIADPDGRYGEDNGVMHDVATSARDPLFYRWHKFIDNIFLEYKDNLDPYTQYELTWPDVVLNDVTVKPHKGDYDDEVHTYWEVDNYELGKGFDYTRKTTATVKVRHLQHEDYHYEIDIDNNAGKAKKAVFRIFLAPKYNEKGELFPVNEQRQLLVELDKFVATLEPGHNVIERQSKESSVTMSKDHVFGEIRNLADDHQCSCGWPDYLLLPKGKYEGMTYQLFVVATDYEEDHVEDAGEECQCRDSMSYCGSVEHKLPDNKPLGYPFDRRIDGTGFEEFKTQNMYYGDVVIQFTGETVTH.

Residues 1-18 form the signal peptide; that stretch reads MWSLALATLFVLGTVIRA. 3 residues coordinate Cu cation: His197, His201, and His227. Residue Asn313 is glycosylated (N-linked (GlcNAc...) asparagine). Positions 348, 352, and 388 each coordinate Cu cation. Cys558 and Cys606 are joined by a disulfide.

It belongs to the tyrosinase family. Hemocyanin subfamily. In terms of assembly, 36-chain polymer consisting of 6 hexamers, each of which includes 4 different chains, A, B, C and D. Hemolymph.

The protein resides in the secreted. The protein localises to the extracellular space. Hemocyanins are copper-containing oxygen carriers occurring freely dissolved in the hemolymph of many mollusks and arthropods. This chain is Hemocyanin subunit A (HCA), found in Scutigera coleoptrata (House centipede).